Consider the following 508-residue polypeptide: p-aminobenzoyl-glutamate transport protein (508 aa).

13 helical membrane passes run 30–50, 85–105, 121–139, 140–159, 164–184, 211–231, 261–281, 303–323, 343–363, 382–402, 405–425, 439–459, and 479–499; these read FLLFIYLIIVLMVTTAILSAF, FSGFAPLGAILALVLGAGLAE, VNARYASYMVLFIAFFSHI, SSDAALVIMPPMGALIFLAV, VAGLLAAIAGVGCGFTANLLI, IDNWYFMASSVVVLTIVGGLI, GLRIAGVVSLLFIAAIALMVI, GIVPLIILFFFVVSLAYGIAT, MAGFIVMVFPLAQFVAMFNWS, LSGIPAFVGLALLSSFLCMFI, GSAIWSILAPIFVPMFMLLGF, SSVLPLAPVSPFVPLFLGFLQ, and LIFLVVWLLMLLAWYLVGLPI.

Its subcellular location is the cell inner membrane. It carries out the reaction N-(4-aminobenzoyl)-L-glutamate(in) + H(+)(in) = N-(4-aminobenzoyl)-L-glutamate(out) + H(+)(out). Its activity is regulated as follows. Completely inhibited by 100 nM sodium azide and by the proton ionophore carbonyl cyanide m-chlorophenylhydrazone (CCCP). Is also strongly inhibited by 100 mM potassium fluoride. In terms of biological role, essential for aminobenzoyl-glutamate utilization. It catalyzes the concentration-dependent uptake of p-aminobenzoyl-glutamate (PABA-GLU) into the cell and allows accumulation of PABA-GLU to a concentration enabling AbgAB to catalyze cleavage into p-aminobenzoate and glutamate. It also seems to increase the sensitivity to low levels of aminobenzoyl-glutamate. May actually serve physiologically as a transporter for some other molecule, perhaps a dipeptide, and that it transports p-aminobenzoyl-glutamate as a secondary activity. The physiological role of abgABT should be clarified. The sequence is that of p-aminobenzoyl-glutamate transport protein from Escherichia coli (strain K12).